Here is a 218-residue protein sequence, read N- to C-terminus: Ras-related protein Rab-27B (218 aa).

An N-acetylthreonine modification is found at threonine 2. Position 16 to 24 (16 to 24 (GDSGVGKTT)) interacts with GTP. An Effector region motif is present at residues 38-46 (FITTVGIDF). Residues 74 to 78 (DTAGQ), 133 to 136 (NKAD), and 163 to 165 (SAA) contribute to the GTP site. Cysteines 123 and 188 form a disulfide. Positions 193-218 (HIPDTVNGSSSGKLDGEKSAEKKCAC) are disordered. Residues 206-218 (LDGEKSAEKKCAC) are compositionally biased toward basic and acidic residues. S-geranylgeranyl cysteine attachment occurs at residues cysteine 216 and cysteine 218. Cysteine 218 carries the cysteine methyl ester modification.

It belongs to the small GTPase superfamily. Rab family. As to quaternary structure, interacts with SYTL2, SYTL4, MYRIP and MLPH. Interacts with RPH3A and RPH3A. Interacts (GDP-bound form preferentially) with DENND10. In terms of tissue distribution, expressed at an extraordinary high level (0.1% of total protein) in urothelium.

It is found in the membrane. Its subcellular location is the late endosome. The catalysed reaction is GTP + H2O = GDP + phosphate + H(+). With respect to regulation, regulated by guanine nucleotide exchange factors (GEFs) which promote the exchange of bound GDP for free GTP, GTPase activating proteins (GAPs) which increase the GTP hydrolysis activity, and GDP dissociation inhibitors which inhibit the dissociation of the nucleotide from the GTPase. Activated by GEFs such as DENND10. Its function is as follows. Small GTPase which cycles between active GTP-bound and inactive GDP-bound states. In its active state, binds to a variety of effector proteins to regulate homeostasis of late endocytic pathway, including endosomal positioning, maturation and secretion. Plays a role in NTRK2/TRKB axonal anterograde transport by facilitating the association of NTRK2/TRKB with KLC1. May be involved in targeting uroplakins to urothelial apical membranes. This Bos taurus (Bovine) protein is Ras-related protein Rab-27B (RAB27B).